A 614-amino-acid polypeptide reads, in one-letter code: Deoxynucleoside triphosphate triphosphohydrolase SAMHD1 (614 aa).

Residues 1-13 (MGSPAAGWGAAPA) are compositionally biased toward low complexity. The interval 1–33 (MGSPAAGWGAAPAKRARREGSAESSCGSPADRD) is disordered. Positions 37–102 (WDTERLCQHL…LACLNQLRQT (66 aa)) constitute an SAM domain. 2 residues coordinate GTP: lysine 107 and valine 108. Residue asparagine 110 participates in dGTP binding. 3 residues coordinate GTP: aspartate 128, glutamine 133, and arginine 136. The dGTP site is built by glutamine 140, leucine 141, valine 147, and arginine 155. Glutamine 140 is a binding site for dATP. Glutamine 140 serves as a coordination point for dCTP. Glutamine 140 lines the dTTP pocket. Residue arginine 155 coordinates dATP. Arginine 155 contributes to the dCTP binding site. Arginine 155 provides a ligand contact to dTTP. Positions 155–307 (RFEHSLGVGY…GIDVDKWDYF (153 aa)) constitute an HD domain. Mn(2+)-binding residues include histidine 158, histidine 197, and aspartate 198. DATP-binding residues include histidine 201 and histidine 206. DCTP-binding residues include histidine 201 and histidine 206. DTTP-binding residues include histidine 201 and histidine 206. Residue histidine 224 is part of the active site. Aspartate 302 is a binding site for Mn(2+). The dGTP site is built by lysine 303, tyrosine 306, aspartate 310, arginine 324, arginine 343, lysine 345, asparagine 349, arginine 357, tyrosine 365, glutamine 366, histidine 367, and lysine 368. Positions 303, 306, and 310 each coordinate dATP. The dCTP site is built by lysine 303, tyrosine 306, and aspartate 310. Lysine 303, tyrosine 306, and aspartate 310 together coordinate dTTP. Arginine 357 contributes to the dATP binding site. Arginine 357 contacts dCTP. A dATP-binding site is contributed by glutamine 366. Glutamine 366 provides a ligand contact to dCTP. Glutamine 366 is a dTTP binding site. GTP-binding residues include arginine 442, lysine 446, and lysine 515. DGTP is bound at residue lysine 515.

The protein belongs to the SAMHD1 family. As to quaternary structure, homodimer; in absence of GTP and dNTP. Homotetramer; in GTP- and dNTP-bound form. Interacts with rbbp8/CtIP. Zn(2+) is required as a cofactor.

The protein localises to the nucleus. Its subcellular location is the chromosome. The catalysed reaction is a 2'-deoxyribonucleoside 5'-triphosphate + H2O = a 2'-deoxyribonucleoside + triphosphate + H(+). It carries out the reaction dATP + H2O = 2'-deoxyadenosine + triphosphate + H(+). The enzyme catalyses dCTP + H2O = 2'-deoxycytidine + triphosphate + H(+). It catalyses the reaction dGTP + H2O = 2'-deoxyguanosine + triphosphate + H(+). The catalysed reaction is dTTP + H2O = thymidine + triphosphate + H(+). With respect to regulation, allosterically activated and regulated via the combined actions of GTP and dNTPs (dATP, dGTP, dTTP and dCTP): Allosteric site 1 binds GTP, while allosteric site 2 binds dNTP. Allosteric activation promotes the formation of highly active homotetramers. In terms of biological role, protein that acts both as a host restriction factor involved in defense response to virus and as a regulator of DNA end resection at stalled replication forks. Has deoxynucleoside triphosphate (dNTPase) activity, which is required to restrict infection by viruses: dNTPase activity reduces cellular dNTP levels to levels too low for retroviral reverse transcription to occur, blocking early-stage virus replication in dendritic and other myeloid cells. Functions during S phase at stalled DNA replication forks to promote the resection of gapped or reversed forks: acts by stimulating the exonuclease activity of MRE11, activating the ATR-CHK1 pathway and allowing the forks to restart replication. Its ability to promote degradation of nascent DNA at stalled replication forks is required to prevent induction of type I interferons, thereby preventing chronic inflammation. Ability to promote DNA end resection at stalled replication forks is independent of dNTPase activity. In Gallus gallus (Chicken), this protein is Deoxynucleoside triphosphate triphosphohydrolase SAMHD1.